The sequence spans 521 residues: Cytochrome P450 monooxygenase ARMGADRAFT_1018420 (521 aa).

A helical transmembrane segment spans residues 9-26 (VSPIWILTAIVVVAYTTV). Residue Cys-443 participates in heme binding. An N-linked (GlcNAc...) asparagine glycan is attached at Asn-450.

The protein belongs to the cytochrome P450 family. Heme serves as cofactor.

The protein resides in the membrane. Its pathway is secondary metabolite biosynthesis. Cytochrome P450 monooxygenase, part of the gene cluster that mediates the biosynthesis of melleolides, a range of antifungal and phytotoxic polyketide derivatives composed of an orsellinic acid (OA) moiety esterified to various sesquiterpene alcohols. The first step in melleolides biosynthesis is performed by the delta(6)-protoilludene synthase PRO1 which catalyzes the cyclization of farnesyl diphosphate to protoilludene. The orsellinic acid synthase armB produces OA by condensing acetyl-CoA with 3 malonyl-CoA units in a three-round chain elongation reaction folowed by a C2-C7 ring closure. ArmB further catalyzes the trans-esterification of OA to the various sesquiterpene alcohols resulting from the hydroxylation of protoilludene. The melleolides cluster also includes 5 cytochrome P450 monooxygenases, 4 NAD(+)-dependent oxidoreductases, one flavin-dependent oxidoreductase, and one O-methyltransferase. The cytochrome P450 monooxygenases may be involved in protoilludene hydroxylation to elaborate melleolides with multiple alcohol groups, such as melleolide D, which carries alcohol functionalities at C-4, C-5, C-10, and C-13. The role of the NAD(+)-dependent enzymes remains unknown. Numerous melleolides, including arnamial, show 5'-O-methylation of the aromatic moiety which may be catalyzed by the methyltransferase encoded in the cluster. The flavin-dependent oxidoreductase might represent the dehydrogenase yielding the aldehyde in position 1 of arnamial and other melleolides. Finally, several halogenase localized outside of the cluster, are able to catalyze the transfer of a single chlorine atom to the melleolide backbone, resulting in a 6'-chloromelleolide product. In Armillaria gallica (Bulbous honey fungus), this protein is Cytochrome P450 monooxygenase ARMGADRAFT_1018420.